The following is a 285-amino-acid chain: Probable endonuclease 4 (285 aa).

The Zn(2+) site is built by His69, His109, Glu145, Asp179, His182, His216, Asp229, His231, and Glu261.

It belongs to the AP endonuclease 2 family. The cofactor is Zn(2+).

It carries out the reaction Endonucleolytic cleavage to 5'-phosphooligonucleotide end-products.. Its function is as follows. Endonuclease IV plays a role in DNA repair. It cleaves phosphodiester bonds at apurinic or apyrimidinic (AP) sites, generating a 3'-hydroxyl group and a 5'-terminal sugar phosphate. The sequence is that of Probable endonuclease 4 from Shigella sonnei (strain Ss046).